The sequence spans 181 residues: Histone deacetylase complex subunit SAP30L-B (181 aa).

2 disulfide bridges follow: C26–C27 and C35–C71. The Atypical zinc finger occupies 26–74 (CCLIDGGERCPRPAGNASFSKRVQKSISQKKLKLDIDKSVRHLYICDFH). Residues 82-103 (RNKRKRKTSDDGGDSPEHETDV) form a disordered region. The Nuclear localization signal (NLS) signature appears at 83–88 (NKRKRK). The interval 85–87 (RKR) is important for DNA and phosphoinositide binding.

Belongs to the SAP30 family. As to quaternary structure, interacts with components of the histone deacetylase complex sin3a, hdac1 and hdac2. Binds histones and nucleosomes.

The protein resides in the nucleus. The protein localises to the nucleolus. In terms of biological role, functions as a transcription repressor, probably via its interaction with histone deacetylase complexes. Involved in the functional recruitment of the class 1 Sin3-histone deacetylase complex (HDAC) to the nucleolus. Binds DNA, apparently without sequence-specificity, and bends bound double-stranded DNA. Binds phosphoinositol phosphates (phosphoinositol 3-phosphate, phosphoinositol 4-phosphate and phosphoinositol 5-phosphate) via the same basic sequence motif that mediates DNA binding and nuclear import. In Xenopus laevis (African clawed frog), this protein is Histone deacetylase complex subunit SAP30L-B (sap30l-b).